We begin with the raw amino-acid sequence, 414 residues long: DNA primase small subunit PriS (414 aa).

Catalysis depends on residues Asp98, Asp100, and Asp312.

The protein belongs to the eukaryotic-type primase small subunit family. In terms of assembly, heterodimer of a small subunit (PriS) and a large subunit (PriL). Mg(2+) serves as cofactor. The cofactor is Mn(2+).

Functionally, catalytic subunit of DNA primase, an RNA polymerase that catalyzes the synthesis of short RNA molecules used as primers for DNA polymerase during DNA replication. The small subunit contains the primase catalytic core and has DNA synthesis activity on its own. Binding to the large subunit stabilizes and modulates the activity, increasing the rate of DNA synthesis while decreasing the length of the DNA fragments, and conferring RNA synthesis capability. The DNA polymerase activity may enable DNA primase to also catalyze primer extension after primer synthesis. May also play a role in DNA repair. The polypeptide is DNA primase small subunit PriS (Methanosarcina barkeri (strain Fusaro / DSM 804)).